The primary structure comprises 164 residues: Protein SprT (164 aa).

Residues 14-156 (QQAETFFKRP…LCKRCRAILV (143 aa)) form the SprT-like domain. H69 provides a ligand contact to Zn(2+). E70 is a catalytic residue. H73 lines the Zn(2+) pocket.

It belongs to the SprT family. The cofactor is Zn(2+).

Its subcellular location is the cytoplasm. The protein is Protein SprT of Pseudomonas putida (strain GB-1).